A 396-amino-acid chain; its full sequence is Elongation factor Tu (396 aa).

Residues 10–206 form the tr-type G domain; that stretch reads KPHINVGTIG…ALDSYIPEPQ (197 aa). The tract at residues 19–26 is G1; it reads GHVDHGKT. 19-26 is a binding site for GTP; it reads GHVDHGKT. A Mg(2+)-binding site is contributed by Thr-26. Residues 60-64 form a G2 region; sequence GITIN. The interval 81 to 84 is G3; that stretch reads DCPG. GTP contacts are provided by residues 81–85 and 136–139; these read DCPGH and NKAD. Positions 136 to 139 are G4; sequence NKAD. The G5 stretch occupies residues 174–176; sequence SAL.

This sequence belongs to the TRAFAC class translation factor GTPase superfamily. Classic translation factor GTPase family. EF-Tu/EF-1A subfamily. As to quaternary structure, monomer.

The protein resides in the cytoplasm. The catalysed reaction is GTP + H2O = GDP + phosphate + H(+). In terms of biological role, GTP hydrolase that promotes the GTP-dependent binding of aminoacyl-tRNA to the A-site of ribosomes during protein biosynthesis. The protein is Elongation factor Tu of Nitrosospira multiformis (strain ATCC 25196 / NCIMB 11849 / C 71).